The chain runs to 150 residues: Flagellar assembly factor FliW (150 aa).

This sequence belongs to the FliW family. Interacts with translational regulator CsrA and flagellin(s).

Its subcellular location is the cytoplasm. Its function is as follows. Acts as an anti-CsrA protein, binds CsrA and prevents it from repressing translation of its target genes, one of which is flagellin. Binds to flagellin and participates in the assembly of the flagellum. This Caldanaerobacter subterraneus subsp. tengcongensis (strain DSM 15242 / JCM 11007 / NBRC 100824 / MB4) (Thermoanaerobacter tengcongensis) protein is Flagellar assembly factor FliW.